The sequence spans 760 residues: Serine/threonine-protein kinase Haspin homolog ALK1 (760 aa).

Residues serine 76 and serine 79 each carry the phosphoserine modification. 4 disordered regions span residues 76 to 100 (SDASLNVTTGNNTSRKTTSNSKKRW), 123 to 153 (SSFTSESHKDRESRNVLQQKRKSLQSYSSLD), 187 to 264 (DDIS…STVS), and 362 to 408 (KRNS…CSYS). The span at 78 to 95 (ASLNVTTGNNTSRKTTSN) shows a compositional bias: polar residues. A KEN box motif is present at residues 200 to 202 (KEN). Residues 209–220 (KKNSSIASTSSE) are compositionally biased toward polar residues. The D box signature appears at 224–232 (RTPLKPLVN). Polar residues predominate over residues 237–250 (PTSQPQQQQPLYNA). Low complexity predominate over residues 251 to 264 (SLSSRRSSISSTVS). A compositionally biased stretch (basic residues) spans 362–386 (KRNSQSSLKHKSSHASLQKFKRNKG). The span at 398-408 (NSSNDDSCSYS) shows a compositional bias: low complexity. One can recognise a Protein kinase domain in the interval 468-760 (NCDIKRILNP…NTGDLLKLYK (293 aa)). ATP-binding positions include 474 to 482 (ILNPAKGDV) and lysine 510.

This sequence belongs to the protein kinase superfamily. Ser/Thr protein kinase family. Haspin subfamily. Periodically phosphorylated during the cell cycle with a phosphorylation peak during mitosis and hyperphosphorylated after DNA damage.

The enzyme catalyses L-seryl-[protein] + ATP = O-phospho-L-seryl-[protein] + ADP + H(+). It catalyses the reaction L-threonyl-[protein] + ATP = O-phospho-L-threonyl-[protein] + ADP + H(+). Functionally, serine/threonine haspin-like protein kinase involved in cell cycle regulation. The polypeptide is Serine/threonine-protein kinase Haspin homolog ALK1 (ALK1) (Saccharomyces cerevisiae (strain ATCC 204508 / S288c) (Baker's yeast)).